The sequence spans 533 residues: Lanosterol 14-alpha demethylase (533 aa).

C472 provides a ligand contact to heme.

The protein belongs to the cytochrome P450 family. The cofactor is heme.

It is found in the membrane. The enzyme catalyses a 14alpha-methyl steroid + 3 reduced [NADPH--hemoprotein reductase] + 3 O2 = a Delta(14) steroid + formate + 3 oxidized [NADPH--hemoprotein reductase] + 4 H2O + 4 H(+). It catalyses the reaction a 14alpha-methyl steroid + reduced [NADPH--hemoprotein reductase] + O2 = a 14alpha-hydroxymethyl steroid + oxidized [NADPH--hemoprotein reductase] + H2O + H(+). The catalysed reaction is a 14alpha-hydroxymethyl steroid + reduced [NADPH--hemoprotein reductase] + O2 = a 14alpha-formyl steroid + oxidized [NADPH--hemoprotein reductase] + 2 H2O + H(+). It carries out the reaction a 14alpha-formyl steroid + reduced [NADPH--hemoprotein reductase] + O2 = a Delta(14) steroid + formate + oxidized [NADPH--hemoprotein reductase] + H2O + 2 H(+). The enzyme catalyses lanosterol + 3 reduced [NADPH--hemoprotein reductase] + 3 O2 = 4,4-dimethyl-5alpha-cholesta-8,14,24-trien-3beta-ol + formate + 3 oxidized [NADPH--hemoprotein reductase] + 4 H2O + 4 H(+). It catalyses the reaction lanosterol + reduced [NADPH--hemoprotein reductase] + O2 = 32-hydroxylanosterol + oxidized [NADPH--hemoprotein reductase] + H2O + H(+). The catalysed reaction is 32-hydroxylanosterol + reduced [NADPH--hemoprotein reductase] + O2 = 32-oxolanosterol + oxidized [NADPH--hemoprotein reductase] + 2 H2O + H(+). It carries out the reaction 32-oxolanosterol + reduced [NADPH--hemoprotein reductase] + O2 = 4,4-dimethyl-5alpha-cholesta-8,14,24-trien-3beta-ol + formate + oxidized [NADPH--hemoprotein reductase] + H2O + 2 H(+). The enzyme catalyses eburicol + 3 reduced [NADPH--hemoprotein reductase] + 3 O2 = 14-demethyleburicol + formate + 3 oxidized [NADPH--hemoprotein reductase] + 4 H2O + 4 H(+). It catalyses the reaction eburicol + reduced [NADPH--hemoprotein reductase] + O2 = 32-hydroxyeburicol + oxidized [NADPH--hemoprotein reductase] + H2O + H(+). The catalysed reaction is 32-hydroxyeburicol + reduced [NADPH--hemoprotein reductase] + O2 = 32-oxoeburicol + oxidized [NADPH--hemoprotein reductase] + 2 H2O + H(+). It carries out the reaction 32-oxoeburicol + reduced [NADPH--hemoprotein reductase] + O2 = 14-demethyleburicol + formate + oxidized [NADPH--hemoprotein reductase] + H2O + 2 H(+). It participates in steroid biosynthesis; zymosterol biosynthesis; zymosterol from lanosterol: step 1/6. Its function is as follows. Sterol 14alpha-demethylase that plays a critical role in the third module of ergosterol biosynthesis pathway, being ergosterol the major sterol component in fungal membranes that participates in a variety of functions. The third module or late pathway involves the ergosterol synthesis itself through consecutive reactions that mainly occur in the endoplasmic reticulum (ER) membrane. In filamentous fungi, during the initial step of this module, lanosterol (lanosta-8,24-dien-3beta-ol) can be metabolized to eburicol. Sterol 14alpha-demethylase catalyzes the three-step oxidative removal of the 14alpha-methyl group (C-32) of both these sterols in the form of formate, and converts eburicol and lanosterol to 14-demethyleburicol (4,4,24-trimethylergosta-8,14,24(28)-trienol) and 4,4-dimethyl-5alpha-cholesta-8,14,24-trien-3beta-ol, respectively, which are further metabolized by other enzymes in the pathway to ergosterol. Can also use substrates not intrinsic to fungi, such as 24,25-dihydrolanosterol (DHL), producing 4,4-dimethyl-8,14-cholestadien-3-beta-ol, but at lower rates than the endogenous substrates. This is Lanosterol 14-alpha demethylase (ERG11) from Candida glabrata (strain ATCC 2001 / BCRC 20586 / JCM 3761 / NBRC 0622 / NRRL Y-65 / CBS 138) (Yeast).